The following is a 98-amino-acid chain: MSGDDLDERIETYYVRVRGVVQGVGFRHATVREAHALKLRGWVANLDDGSVEAMLQGPAPQIDRMLAWLRHGPSTAHVTEVTFEERPTDKRFERFQQH.

Residues 12 to 98 (TYYVRVRGVV…DKRFERFQQH (87 aa)) form the Acylphosphatase-like domain. Catalysis depends on residues arginine 27 and asparagine 45.

Belongs to the acylphosphatase family.

It catalyses the reaction an acyl phosphate + H2O = a carboxylate + phosphate + H(+). The protein is Acylphosphatase (acyP) of Burkholderia thailandensis (strain ATCC 700388 / DSM 13276 / CCUG 48851 / CIP 106301 / E264).